The primary structure comprises 514 residues: Membrane-bound lytic murein transglycosylase F (514 aa).

The first 30 residues, 1–30 (MLSNNPLITKFRELFTVALVLALLSGCQWQ), serve as a signal peptide directing secretion. Residues 31-271 (DDNLTDLEKI…QLEEKYFGHV (241 aa)) are non-LT domain. Positions 272 to 514 (GSFDYVDTRA…KTIEDPGPSQ (243 aa)) are LT domain. Glu-316 is an active-site residue. The interval 482-514 (PVPPRQANVDGSLNNEAAISSAEKTIEDPGPSQ) is disordered. Polar residues predominate over residues 490–499 (VDGSLNNEAA).

The protein in the N-terminal section; belongs to the bacterial solute-binding protein 3 family. It in the C-terminal section; belongs to the transglycosylase Slt family.

Its subcellular location is the cell outer membrane. The enzyme catalyses Exolytic cleavage of the (1-&gt;4)-beta-glycosidic linkage between N-acetylmuramic acid (MurNAc) and N-acetylglucosamine (GlcNAc) residues in peptidoglycan, from either the reducing or the non-reducing ends of the peptidoglycan chains, with concomitant formation of a 1,6-anhydrobond in the MurNAc residue.. Functionally, murein-degrading enzyme that degrades murein glycan strands and insoluble, high-molecular weight murein sacculi, with the concomitant formation of a 1,6-anhydromuramoyl product. Lytic transglycosylases (LTs) play an integral role in the metabolism of the peptidoglycan (PG) sacculus. Their lytic action creates space within the PG sacculus to allow for its expansion as well as for the insertion of various structures such as secretion systems and flagella. The chain is Membrane-bound lytic murein transglycosylase F from Photobacterium profundum (strain SS9).